The sequence spans 247 residues: NifU-like scaffold protein (247 aa).

Belongs to the NifU family. As to quaternary structure, homodimer.

It localises to the plastid. The protein localises to the apicoplast. Its pathway is cofactor biosynthesis; iron-sulfur cluster biosynthesis. In terms of biological role, binds and transfers [4Fe-4S] iron-sulfur clusters to target proteins. This Plasmodium falciparum (isolate 3D7) protein is NifU-like scaffold protein.